The chain runs to 101 residues: C-X-C motif chemokine 3 (101 aa).

Positions Met-1–Ala-32 are cleaved as a signal peptide. 2 cysteine pairs are disulfide-bonded: Cys-37–Cys-63 and Cys-39–Cys-79.

It belongs to the intercrine alpha (chemokine CxC) family.

The protein resides in the secreted. In terms of biological role, ligand for CXCR2. Has chemotactic activity for neutrophils. May play a role in inflammation and exert its effects on endothelial cells in an autocrine fashion. This chain is C-X-C motif chemokine 3 (Cxcl3), found in Rattus norvegicus (Rat).